Consider the following 172-residue polypeptide: Adenine phosphoribosyltransferase (172 aa).

It belongs to the purine/pyrimidine phosphoribosyltransferase family. Homodimer.

The protein resides in the cytoplasm. The enzyme catalyses AMP + diphosphate = 5-phospho-alpha-D-ribose 1-diphosphate + adenine. Its pathway is purine metabolism; AMP biosynthesis via salvage pathway; AMP from adenine: step 1/1. In terms of biological role, catalyzes a salvage reaction resulting in the formation of AMP, that is energically less costly than de novo synthesis. This chain is Adenine phosphoribosyltransferase, found in Herpetosiphon aurantiacus (strain ATCC 23779 / DSM 785 / 114-95).